We begin with the raw amino-acid sequence, 556 residues long: Probable Xaa-Pro aminopeptidase SS1G_06948 (556 aa).

Residues aspartate 305, aspartate 316, glutamate 460, and glutamate 501 each coordinate Mn(2+).

The protein belongs to the peptidase M24B family. Mn(2+) serves as cofactor.

The enzyme catalyses Release of any N-terminal amino acid, including proline, that is linked to proline, even from a dipeptide or tripeptide.. Its function is as follows. Catalyzes the removal of a penultimate prolyl residue from the N-termini of peptides. This is Probable Xaa-Pro aminopeptidase SS1G_06948 from Sclerotinia sclerotiorum (strain ATCC 18683 / 1980 / Ss-1) (White mold).